The following is a 529-amino-acid chain: Bifunctional purine biosynthesis protein PurH (529 aa).

The 148-residue stretch at 1-148 (MNNARPIRRA…KNHKDTTIIV (148 aa)) folds into the MGS-like domain.

This sequence belongs to the PurH family.

The enzyme catalyses (6R)-10-formyltetrahydrofolate + 5-amino-1-(5-phospho-beta-D-ribosyl)imidazole-4-carboxamide = 5-formamido-1-(5-phospho-D-ribosyl)imidazole-4-carboxamide + (6S)-5,6,7,8-tetrahydrofolate. It carries out the reaction IMP + H2O = 5-formamido-1-(5-phospho-D-ribosyl)imidazole-4-carboxamide. Its pathway is purine metabolism; IMP biosynthesis via de novo pathway; 5-formamido-1-(5-phospho-D-ribosyl)imidazole-4-carboxamide from 5-amino-1-(5-phospho-D-ribosyl)imidazole-4-carboxamide (10-formyl THF route): step 1/1. It participates in purine metabolism; IMP biosynthesis via de novo pathway; IMP from 5-formamido-1-(5-phospho-D-ribosyl)imidazole-4-carboxamide: step 1/1. The protein is Bifunctional purine biosynthesis protein PurH of Shewanella piezotolerans (strain WP3 / JCM 13877).